We begin with the raw amino-acid sequence, 282 residues long: Stress response regulator protein 1 (282 aa).

2 stretches are compositionally biased toward low complexity: residues 12–30 (NLSRSSSPAAPPTTNHSST) and 41–58 (SLDTNSQSDSNSTQSNNN). Disordered stretches follow at residues 12–31 (NLSRSSSPAAPPTTNHSSTV), 41–84 (SLDT…DDED), and 112–139 (LTPFDGQTTSPQDSIISSKSSNKSTTVV). The span at 66–77 (SDYNSYTHNQYY) shows a compositional bias: polar residues. Low complexity predominate over residues 125 to 139 (SIISSKSSNKSTTVV). The Response regulatory domain occupies 155-273 (SFLIVDDNII…LDFMANSIDD (119 aa)). The residue at position 206 (Asp-206) is a 4-aspartylphosphate.

Required for stress adaptation, morphogenesis and virulence. The chain is Stress response regulator protein 1 (SRR1) from Candida albicans (strain WO-1) (Yeast).